A 184-amino-acid polypeptide reads, in one-letter code: Sec-independent protein translocase protein TatB (184 aa).

The chain crosses the membrane as a helical span at residues 1–21 (MFDIGFSELVLLFVVGLIVLG). The span at 149-168 (AEEGEPMLEMGESDFSEDEQ) shows a compositional bias: acidic residues. The disordered stretch occupies residues 149–184 (AEEGEPMLEMGESDFSEDEQATASSNETIENIKEKV).

The protein belongs to the TatB family. In terms of assembly, the Tat system comprises two distinct complexes: a TatABC complex, containing multiple copies of TatA, TatB and TatC subunits, and a separate TatA complex, containing only TatA subunits. Substrates initially bind to the TatABC complex, which probably triggers association of the separate TatA complex to form the active translocon.

It is found in the cell inner membrane. In terms of biological role, part of the twin-arginine translocation (Tat) system that transports large folded proteins containing a characteristic twin-arginine motif in their signal peptide across membranes. Together with TatC, TatB is part of a receptor directly interacting with Tat signal peptides. TatB may form an oligomeric binding site that transiently accommodates folded Tat precursor proteins before their translocation. The chain is Sec-independent protein translocase protein TatB from Histophilus somni (strain 129Pt) (Haemophilus somnus).